We begin with the raw amino-acid sequence, 437 residues long: GTPase Obg (437 aa).

The 160-residue stretch at 2 to 161 (SDFIDRALIT…RELQLELKVI (160 aa)) folds into the Obg domain. Positions 162–335 (ADVGLVGFPN…LQRRIVDILR (174 aa)) constitute an OBG-type G domain. GTP-binding positions include 168–175 (GFPNAGKS), 193–197 (FTTLS), 214–217 (DIPG), 284–287 (NKTD), and 316–318 (SAA). Residues S175 and T195 each coordinate Mg(2+). The region spanning 355-433 (FSNIDPNDFW…IEKAELLWQD (79 aa)) is the OCT domain.

The protein belongs to the TRAFAC class OBG-HflX-like GTPase superfamily. OBG GTPase family. As to quaternary structure, monomer. Requires Mg(2+) as cofactor.

It is found in the cytoplasm. In terms of biological role, an essential GTPase which binds GTP, GDP and possibly (p)ppGpp with moderate affinity, with high nucleotide exchange rates and a fairly low GTP hydrolysis rate. Plays a role in control of the cell cycle, stress response, ribosome biogenesis and in those bacteria that undergo differentiation, in morphogenesis control. The chain is GTPase Obg from Herpetosiphon aurantiacus (strain ATCC 23779 / DSM 785 / 114-95).